The chain runs to 254 residues: 5'-nucleotidase SurE (254 aa).

A divalent metal cation-binding residues include aspartate 8, aspartate 9, serine 40, and asparagine 93.

It belongs to the SurE nucleotidase family. A divalent metal cation serves as cofactor.

The protein localises to the cytoplasm. It carries out the reaction a ribonucleoside 5'-phosphate + H2O = a ribonucleoside + phosphate. In terms of biological role, nucleotidase that shows phosphatase activity on nucleoside 5'-monophosphates. In Actinobacillus pleuropneumoniae serotype 5b (strain L20), this protein is 5'-nucleotidase SurE.